We begin with the raw amino-acid sequence, 209 residues long: Mitochondrial import inner membrane translocase subunit Tim23 (209 aa).

The next 3 membrane-spanning stretches (helical) occupy residues 73 to 93, 125 to 145, and 181 to 197; these read FELA…FGAM, ALWA…GVII, and GLAG…YNNW.

The protein belongs to the Tim17/Tim22/Tim23 family. As to quaternary structure, component of the TIM23 complex at least composed of TIMM23, TIMM17 (TIMM17A or TIMM17B) and TIMM50; within this complex, directly interacts with TIMM50. The complex interacts with the TIMM44 component of the PAM complex and with DNAJC15. Upon mitochondrial depolarization, interacts with PINK1; the interaction is required for PINK1 accumulation at the outer mitochondrial membrane, kinase activation by autophosphorylation and PRKN recruitement to mitochondria.

It is found in the mitochondrion inner membrane. Functionally, essential component of the TIM23 complex, a complex that mediates the translocation of transit peptide-containing proteins across the mitochondrial inner membrane. Has a role in the activation of stress-induced mitophagy by protecting PINK1 from OMA1-mediated degradation and facilitating its accumulation at the outer mitochondrial membrane in response to depolarization. This chain is Mitochondrial import inner membrane translocase subunit Tim23 (Timm23), found in Mus musculus (Mouse).